We begin with the raw amino-acid sequence, 215 residues long: Octanoyltransferase (215 aa).

A BPL/LPL catalytic domain is found at 35 to 210 (PDTPDQLWVV…HCLEAIVEYG (176 aa)). Residues 74 to 81 (RGGQVTYH), 141 to 143 (SVG), and 154 to 156 (GLA) contribute to the substrate site. Cysteine 172 serves as the catalytic Acyl-thioester intermediate.

It belongs to the LipB family.

It localises to the cytoplasm. The catalysed reaction is octanoyl-[ACP] + L-lysyl-[protein] = N(6)-octanoyl-L-lysyl-[protein] + holo-[ACP] + H(+). Its pathway is protein modification; protein lipoylation via endogenous pathway; protein N(6)-(lipoyl)lysine from octanoyl-[acyl-carrier-protein]: step 1/2. Functionally, catalyzes the transfer of endogenously produced octanoic acid from octanoyl-acyl-carrier-protein onto the lipoyl domains of lipoate-dependent enzymes. Lipoyl-ACP can also act as a substrate although octanoyl-ACP is likely to be the physiological substrate. The chain is Octanoyltransferase from Alkalilimnicola ehrlichii (strain ATCC BAA-1101 / DSM 17681 / MLHE-1).